Consider the following 360-residue polypeptide: Decorin (360 aa).

An N-terminal signal peptide occupies residues 1 to 16 (MKATIIFFLVAQVSWA). A propeptide spanning residues 17–30 (GPFQQKGLFDFMLE) is cleaved from the precursor. O-linked (Xyl...) (glycosaminoglycan) serine glycosylation occurs at S34. Intrachain disulfides connect C55-C61 and C59-C68. LRR repeat units lie at residues 74-94 (EKVP…NNKI), 95-118 (TEIK…NNKI), 119-142 (SKIS…KNQL), 143-163 (KELP…ENEI), 164-187 (TKVR…TNPL), 188-213 (KSSG…DTNI), 214-234 (TTIP…GNKI), 235-258 (TKVD…FNSI), 259-282 (SAVD…NNKL), 283-305 (VKVP…NNNI), 306-335 (SAIG…SNPV), and 336-360 (QYWE…GNYK). A glycan (N-linked (GlcNAc...) asparagine) is linked at N212. N-linked (GlcNAc...) asparagine glycosylation is found at N263 and N304. C314 and C347 form a disulfide bridge.

This sequence belongs to the small leucine-rich proteoglycan (SLRP) family. SLRP class I subfamily. In terms of assembly, binds to type I and type II collagen, fibronectin and TGF-beta. Forms a ternary complex with MFAP2 and ELN. Interacts with DPT. Post-translationally, the attached glycosaminoglycan chain can be either chondroitin sulfate or dermatan sulfate depending upon the tissue of origin.

Its subcellular location is the secreted. It is found in the extracellular space. The protein localises to the extracellular matrix. In terms of biological role, may affect the rate of fibrils formation. This is Decorin (DCN) from Ovis aries (Sheep).